Reading from the N-terminus, the 257-residue chain is Snake venom serine protease KN3 (257 aa).

Positions 1 to 18 are cleaved as a signal peptide; it reads MVLIRVLANLLILQLSYA. A propeptide spanning residues 19-24 is cleaved from the precursor; sequence QKSSKL. The Peptidase S1 domain occupies 25–248; that stretch reads VVGGDECNIN…HLDWIKSIIA (224 aa). Disulfide bonds link cysteine 31-cysteine 162, cysteine 49-cysteine 65, cysteine 97-cysteine 255, cysteine 141-cysteine 209, cysteine 173-cysteine 188, and cysteine 199-cysteine 224. Active-site charge relay system residues include histidine 64 and aspartate 109. Asparagine 120, asparagine 121, and asparagine 164 each carry an N-linked (GlcNAc...) asparagine glycan. Residue serine 203 is the Charge relay system of the active site.

It belongs to the peptidase S1 family. Snake venom subfamily. Monomer. In terms of tissue distribution, expressed by the venom gland.

The protein resides in the secreted. In terms of biological role, snake venom serine protease that may act in the hemostasis system of the prey. This is Snake venom serine protease KN3 from Trimeresurus stejnegeri (Chinese green tree viper).